A 273-amino-acid chain; its full sequence is Cysteine protease S273R (273 aa).

Active-site residues include His-168 and Asn-187. A substrate-binding site is contributed by Gln-226. Cys-232 serves as the catalytic Nucleophile.

The protein belongs to the peptidase C63 family.

It is found in the host cytoplasm. Its subcellular location is the virion. In terms of biological role, cysteine protease that plays several role during infection including processing of the structural polyprotein or inhibition of the host immune response. Catalyzes the maturation of the pp220 and pp62 polyprotein precursors into core-shell proteins. Plays a role in the disruption of host pyroptosis via specific cleavage of gasdermin D/GSDMD. In addition, strongly decreases the host cGAS-STING signaling by targeting IKBKE via its enzymatic activity. Also impairs host FOXJ1-mediated antiviral effect via degradation of FOXJ1. This is Cysteine protease S273R from African swine fever virus (isolate Tick/Malawi/Lil 20-1/1983) (ASFV).